Here is a 128-residue protein sequence, read N- to C-terminus: MVHGTGIDLVDIDRLEKILMKWDMSFLKKVFSPAEIEYCAKRAFPAIHYAARFAAKESFLKSLGMGIGMGIPLKDIEVRNDPLGRPVLNLYGKALEILEKRGITTVHVSLSHSRSQAGAVVILEGLKD.

D8 and E57 together coordinate Mg(2+).

The protein belongs to the P-Pant transferase superfamily. AcpS family. It depends on Mg(2+) as a cofactor.

Its subcellular location is the cytoplasm. The catalysed reaction is apo-[ACP] + CoA = holo-[ACP] + adenosine 3',5'-bisphosphate + H(+). Transfers the 4'-phosphopantetheine moiety from coenzyme A to a Ser of acyl-carrier-protein. The sequence is that of Holo-[acyl-carrier-protein] synthase from Syntrophus aciditrophicus (strain SB).